Consider the following 491-residue polypeptide: Cyclin-B1-5 (491 aa).

The region spanning 275 to 347 (DMYSFYKEVE…VKAVPKRELQ (73 aa)) is the Cyclin N-terminal domain.

The protein belongs to the cyclin family. Cyclin AB subfamily. In terms of tissue distribution, expressed in roots, stems and flowers.

The polypeptide is Cyclin-B1-5 (CYCB1-5) (Arabidopsis thaliana (Mouse-ear cress)).